A 342-amino-acid polypeptide reads, in one-letter code: N-acetyl-gamma-glutamyl-phosphate reductase (342 aa).

Residue Cys-156 is part of the active site.

Belongs to the NAGSA dehydrogenase family. Type 1 subfamily.

The protein localises to the cytoplasm. The enzyme catalyses N-acetyl-L-glutamate 5-semialdehyde + phosphate + NADP(+) = N-acetyl-L-glutamyl 5-phosphate + NADPH + H(+). It participates in amino-acid biosynthesis; L-arginine biosynthesis; N(2)-acetyl-L-ornithine from L-glutamate: step 3/4. Functionally, catalyzes the NADPH-dependent reduction of N-acetyl-5-glutamyl phosphate to yield N-acetyl-L-glutamate 5-semialdehyde. The sequence is that of N-acetyl-gamma-glutamyl-phosphate reductase from Pseudoalteromonas atlantica (strain T6c / ATCC BAA-1087).